A 449-amino-acid chain; its full sequence is MREILHIQGGQCGNQIGSKFWEVVNLEHGIDQTGRYVGDSELQLERVNVYYNEASCGRYVPRAVLMDLEPGTMDSVRSGPYGQIFRPDNFVFGQSGAGNNWAKGHYTEGAELIDSVLDVVRKEAENCDCLQGFQVCHSLGGGTGSGMGTLLISKIREEYPDRMMMTFSVFPSPKVSDTVVEPYNATLSVHQLVENADECMVLDNEALYDICFRTLKLSTPSFGDLNHLISATMSGVTCCLRFPGQLNSDLRKLAVNLIPFPRLHFFMVGFAPLTSRGSQQYRNLTVPELTQQMWDAKNMMCAADPRHGRYLTASAMFRGKMSTKEVDEQMLNVQNKNSSYFVEWIPNNVKSTVCDIPPTGLKMASTFIGNSTSIQEMFRRVSEQFTAMFRRKAFLHWYTGEGMDEMEFTEAESNMNDLVSEYQQYQDATADEEGEYEEEEAEYEQEETY.

8 residues coordinate GTP: glutamine 11, glutamate 69, serine 138, glycine 142, threonine 143, glycine 144, asparagine 204, and asparagine 226. Residue glutamate 69 coordinates Mg(2+). The tract at residues 422–449 (YQQYQDATADEEGEYEEEEAEYEQEETY) is disordered. A compositionally biased stretch (acidic residues) spans 429 to 449 (TADEEGEYEEEEAEYEQEETY).

The protein belongs to the tubulin family. Dimer of alpha and beta chains. A typical microtubule is a hollow water-filled tube with an outer diameter of 25 nm and an inner diameter of 15 nM. Alpha-beta heterodimers associate head-to-tail to form protofilaments running lengthwise along the microtubule wall with the beta-tubulin subunit facing the microtubule plus end conferring a structural polarity. Microtubules usually have 13 protofilaments but different protofilament numbers can be found in some organisms and specialized cells. The cofactor is Mg(2+).

It is found in the cytoplasm. The protein resides in the cytoskeleton. Functionally, tubulin is the major constituent of microtubules, a cylinder consisting of laterally associated linear protofilaments composed of alpha- and beta-tubulin heterodimers. Microtubules grow by the addition of GTP-tubulin dimers to the microtubule end, where a stabilizing cap forms. Below the cap, tubulin dimers are in GDP-bound state, owing to GTPase activity of alpha-tubulin. The chain is Tubulin beta-7 chain (TUBB7) from Arabidopsis thaliana (Mouse-ear cress).